A 440-amino-acid polypeptide reads, in one-letter code: 23S rRNA (uracil(1939)-C(5))-methyltransferase RlmD (440 aa).

The TRAM domain occupies lysine 10–glutamine 68. Residues cysteine 81, cysteine 87, cysteine 90, and cysteine 169 each coordinate [4Fe-4S] cluster. Positions 273, 302, 307, 323, 350, and 371 each coordinate S-adenosyl-L-methionine. Catalysis depends on cysteine 397, which acts as the Nucleophile.

It belongs to the class I-like SAM-binding methyltransferase superfamily. RNA M5U methyltransferase family. RlmD subfamily.

The catalysed reaction is uridine(1939) in 23S rRNA + S-adenosyl-L-methionine = 5-methyluridine(1939) in 23S rRNA + S-adenosyl-L-homocysteine + H(+). Catalyzes the formation of 5-methyl-uridine at position 1939 (m5U1939) in 23S rRNA. This chain is 23S rRNA (uracil(1939)-C(5))-methyltransferase RlmD, found in Aeromonas hydrophila subsp. hydrophila (strain ATCC 7966 / DSM 30187 / BCRC 13018 / CCUG 14551 / JCM 1027 / KCTC 2358 / NCIMB 9240 / NCTC 8049).